The primary structure comprises 220 residues: UPF0319 protein YccT (220 aa).

Residues 1-20 (MKAGTLTLLIALCLPISVSA) form the signal peptide.

Belongs to the UPF0319 family.

This chain is UPF0319 protein YccT, found in Escherichia fergusonii (strain ATCC 35469 / DSM 13698 / CCUG 18766 / IAM 14443 / JCM 21226 / LMG 7866 / NBRC 102419 / NCTC 12128 / CDC 0568-73).